A 334-amino-acid chain; its full sequence is MKVSKVYTTIDAHVAGEPLRIITGGVPEIKGDTQLERRAYCMEHLDHLREVLMYEPRGHHGMYGCIITPPASAHADFGVLFMHNEGWSTMCGHGIIAVITVGIETGMFEVTGEKQNFIIDSPAGEVIAYAKYNGSEVESVSFENVPSFVYKKDVPIIIDDYEFQVDIAFGGAFYAVVDSKEFGLKVDFKDLSAIQMWGGKIKHYIESKMEVKHPLEEGLKGIYGVIFSDEPKGEDATLRNVTIFADGQVDRSPCGTGTSARIATLFEKDALQKGEIFVHECITDGKFEGEVLSVTAVDTYEAVVPKVTGHAFITGFHQFVVDPRDDLKRGFLLG.

C91 functions as the Proton acceptor in the catalytic mechanism. Substrate is bound by residues 92-93, D250, and 255-256; these read GH and GT.

Belongs to the proline racemase family.

It catalyses the reaction trans-3-hydroxy-L-proline = 1-pyrroline-2-carboxylate + H2O. Functionally, catalyzes the dehydration of trans-3-hydroxy-L-proline (t3LHyp) to Delta(1)-pyrroline-2-carboxylate (Pyr2C). Is likely involved in a degradation pathway that converts t3LHyp to L-proline. Can also catalyze the epimerization of trans-4-hydroxy-L-proline (t4LHyp) to cis-4-hydroxy-D-proline (c4DHyp) in vitro. Displays no proline racemase activity. The protein is Trans-3-hydroxy-L-proline dehydratase of Bacillus thuringiensis subsp. konkukian (strain 97-27).